The chain runs to 156 residues: rRNA methyltransferase (156 aa).

Its function is as follows. Modifies 16S rRNA so making ribosomes resistant to certain aminoglycosides. In Saccharopolyspora hirsuta, this protein is rRNA methyltransferase (kamC).